Consider the following 162-residue polypeptide: Ribosomal RNA large subunit methyltransferase H (162 aa).

Residue G108 coordinates S-adenosyl-L-methionine.

Belongs to the RNA methyltransferase RlmH family. Homodimer.

It is found in the cytoplasm. The enzyme catalyses pseudouridine(1915) in 23S rRNA + S-adenosyl-L-methionine = N(3)-methylpseudouridine(1915) in 23S rRNA + S-adenosyl-L-homocysteine + H(+). Specifically methylates the pseudouridine at position 1915 (m3Psi1915) in 23S rRNA. In Methylobacterium nodulans (strain LMG 21967 / CNCM I-2342 / ORS 2060), this protein is Ribosomal RNA large subunit methyltransferase H.